The primary structure comprises 266 residues: Protein SCO2 homolog, mitochondrial (266 aa).

A mitochondrion-targeting transit peptide spans 1 to 41 (MLLLTRSPTAWHRLSQLKPRVLPGTLGGQALHLRSWLLSRQ). Residues 42 to 60 (GPAETGGQGQPQGPGLRTR) lie on the Mitochondrial matrix side of the membrane. A helical transmembrane segment spans residues 61–78 (LLITGLFGAGLGGAWLAL). At 79–266 (RAEKERLQQQ…HMAAFRSVLS (188 aa)) the chain is on the mitochondrial intermembrane side. Residues 85-259 (LQQQKRTEAL…ISDSVRRHMA (175 aa)) enclose the Thioredoxin domain. Residues cysteine 133, cysteine 137, and histidine 224 each contribute to the Cu cation site. Cysteine 133 and cysteine 137 are joined by a disulfide.

The protein belongs to the SCO1/2 family. Homodimer. Interacts with COA6. Found in a complex with TMEM177, COX20, COA6, MT-CO2/COX2, COX18 and SCO1. Interacts with TMEM177 in a COX20-dependent manner. Interacts with COX20 in a MT-CO2/COX2- and COX18-dependent manner. Interacts with COX16. Ubiquitous.

It localises to the mitochondrion inner membrane. In terms of biological role, copper metallochaperone essential for the synthesis and maturation of cytochrome c oxidase subunit II (MT-CO2/COX2) by facilitating the incorporation of copper into the Cu(A) site of MT-CO2/COX2. Could also act as a thiol-disulfide oxidoreductase to regulate the redox state of the cysteines in SCO1 during maturation of MT-CO2/COX2. This chain is Protein SCO2 homolog, mitochondrial (SCO2), found in Homo sapiens (Human).